Here is a 720-residue protein sequence, read N- to C-terminus: Inactive serine protease PAMR1 (720 aa).

A signal peptide spans Met1–Ser21. Intrachain disulfides connect Cys128–Cys150, Cys177–Cys199, Cys239–Cys250, Cys244–Cys260, Cys262–Cys271, Cys280–Cys329, Cys315–Cys342, Cys414–Cys442, and Cys489–Cys505. The 109-residue stretch at Cys128–Ile236 folds into the CUB domain. In terms of domain architecture, EGF-like spans Glu235–Glu272. Sushi domains follow at residues Arg278–Lys344 and Ala387–Pro444. One can recognise a Peptidase S1 domain in the interval Ile445–Lys720. N-linked (GlcNAc...) asparagine glycosylation occurs at Asn614. 2 disulfides stabilise this stretch: Cys630–Cys649 and Cys661–Cys697.

Belongs to the peptidase S1 family.

It is found in the secreted. Its function is as follows. May play a role in regeneration of skeletal muscle. The sequence is that of Inactive serine protease PAMR1 (PAMR1) from Homo sapiens (Human).